Consider the following 247-residue polypeptide: Uridylate kinase (247 aa).

15 to 18 lines the ATP pocket; that stretch reads KLSG. Positions 23 to 28 are involved in allosteric activation by GTP; the sequence is GEEGFG. UMP is bound at residue G57. The ATP site is built by G58 and R62. UMP-binding positions include D77 and 138 to 145; that span reads TGNPFCTT. The ATP site is built by T165, Y171, and D174.

This sequence belongs to the UMP kinase family. In terms of assembly, homohexamer.

It localises to the cytoplasm. It carries out the reaction UMP + ATP = UDP + ADP. It participates in pyrimidine metabolism; CTP biosynthesis via de novo pathway; UDP from UMP (UMPK route): step 1/1. Its activity is regulated as follows. Allosterically activated by GTP. Inhibited by UTP. In terms of biological role, catalyzes the reversible phosphorylation of UMP to UDP. The protein is Uridylate kinase of Shewanella loihica (strain ATCC BAA-1088 / PV-4).